Reading from the N-terminus, the 152-residue chain is Large ribosomal subunit protein uL13 (152 aa).

Belongs to the universal ribosomal protein uL13 family. Part of the 50S ribosomal subunit.

In terms of biological role, this protein is one of the early assembly proteins of the 50S ribosomal subunit, although it is not seen to bind rRNA by itself. It is important during the early stages of 50S assembly. This chain is Large ribosomal subunit protein uL13, found in Borreliella afzelii (strain PKo) (Borrelia afzelii).